A 543-amino-acid chain; its full sequence is Serendipity locus protein alpha (543 aa).

Its subcellular location is the cytoplasm. It is found in the cell membrane. Required for the cellularization of the syncytial blastoderm embryo. Involved in the localization of the actin filaments just prior to and during plasma membrane invagination. Sry-alpha together with nullo and bnk may provide auxiliary functions, by acting both to stabilize a large and dynamic microfilament structure and regulate its functions. The protein is Serendipity locus protein alpha (Sry-alpha) of Drosophila subobscura (Fruit fly).